Reading from the N-terminus, the 260-residue chain is Serine protease VLSP-1 (260 aa).

Positions 1–18 are cleaved as a signal peptide; that stretch reads MVLIRVLANLLVLHLSYA. A propeptide spanning residues 19–24 is cleaved from the precursor; that stretch reads QKSSEL. Residues 25 to 251 enclose the Peptidase S1 domain; the sequence is VIGGDECNIN…YSDWIQSIIA (227 aa). 6 disulfide bridges follow: Cys31–Cys165, Cys52–Cys68, Cys100–Cys258, Cys144–Cys212, Cys176–Cys191, and Cys202–Cys227. N-linked (GlcNAc...) asparagine glycosylation occurs at Asn44. His67 functions as the Charge relay system in the catalytic mechanism. An N-linked (GlcNAc...) asparagine glycan is attached at Asn103. Asp112 serves as the catalytic Charge relay system. Asn156 carries N-linked (GlcNAc...) asparagine glycosylation. The active-site Charge relay system is the Ser206.

This sequence belongs to the peptidase S1 family. Snake venom subfamily. In terms of tissue distribution, expressed by the venom gland.

Its subcellular location is the secreted. Snake venom serine protease that may act in the hemostasis system of the prey. In Macrovipera lebetinus (Levantine viper), this protein is Serine protease VLSP-1.